A 130-amino-acid polypeptide reads, in one-letter code: Glycine cleavage system H protein (130 aa).

Residues 24-106 (IYSVGITEHA…YTDGWLFRIK (83 aa)) enclose the Lipoyl-binding domain. An N6-lipoyllysine modification is found at Lys-65.

The protein belongs to the GcvH family. The glycine cleavage system is composed of four proteins: P, T, L and H. Requires (R)-lipoate as cofactor.

Its function is as follows. The glycine cleavage system catalyzes the degradation of glycine. The H protein shuttles the methylamine group of glycine from the P protein to the T protein. In Pectobacterium atrosepticum (strain SCRI 1043 / ATCC BAA-672) (Erwinia carotovora subsp. atroseptica), this protein is Glycine cleavage system H protein.